Reading from the N-terminus, the 399-residue chain is MTPSAASALVEKTPLETYVPPAKPSLIGLSRAQLCDRLGDVGVAPPQRKMRAQQLWHWMYVRGARDFSEMTNVSKEMRAMLAEHFTVDRPEVVAEQISADGTRKWLLRLPSGGDGQKAHEVECVYIPETDRGTLCVSSQVGCTLNCAFCHTGTQRLVRNLTAGEIVGQVMVARDRLGDWIDRETPNGNRLITNIVMMGMGEPLYNFDAVRDALLIVSDNEGIGISRRRITLSTSGVVPNIKRTGDEIGVMLAISLHAVRDELRDELVPLNRKYPLKELLQACRDYPGASNARRITFEYVMLKGVNDSLDDARKLVQLLKGIPAKINLIPFNPWPGSNYECSDWDQIEKFSEYVFNAGYSSPVRTPRGRDILAACGQLKSETEKLSVRERNALRAMAMTD.

The Proton acceptor role is filled by glutamate 122. Residues 128–371 (ETDRGTLCVS…VRTPRGRDIL (244 aa)) enclose the Radical SAM core domain. A disulfide bridge connects residues cysteine 135 and cysteine 374. 3 residues coordinate [4Fe-4S] cluster: cysteine 142, cysteine 146, and cysteine 149. S-adenosyl-L-methionine contacts are provided by residues 200 to 201 (GE), serine 232, 254 to 256 (SLH), and asparagine 331. Cysteine 374 acts as the S-methylcysteine intermediate in catalysis.

The protein belongs to the radical SAM superfamily. RlmN family. It depends on [4Fe-4S] cluster as a cofactor.

It is found in the cytoplasm. The enzyme catalyses adenosine(2503) in 23S rRNA + 2 reduced [2Fe-2S]-[ferredoxin] + 2 S-adenosyl-L-methionine = 2-methyladenosine(2503) in 23S rRNA + 5'-deoxyadenosine + L-methionine + 2 oxidized [2Fe-2S]-[ferredoxin] + S-adenosyl-L-homocysteine. It carries out the reaction adenosine(37) in tRNA + 2 reduced [2Fe-2S]-[ferredoxin] + 2 S-adenosyl-L-methionine = 2-methyladenosine(37) in tRNA + 5'-deoxyadenosine + L-methionine + 2 oxidized [2Fe-2S]-[ferredoxin] + S-adenosyl-L-homocysteine. Specifically methylates position 2 of adenine 2503 in 23S rRNA and position 2 of adenine 37 in tRNAs. m2A2503 modification seems to play a crucial role in the proofreading step occurring at the peptidyl transferase center and thus would serve to optimize ribosomal fidelity. The sequence is that of Dual-specificity RNA methyltransferase RlmN from Rhodopseudomonas palustris (strain ATCC BAA-98 / CGA009).